Reading from the N-terminus, the 372-residue chain is Protein RecA (372 aa).

81–88 (GPESSGKT) contacts ATP.

The protein belongs to the RecA family.

The protein localises to the cytoplasm. Functionally, can catalyze the hydrolysis of ATP in the presence of single-stranded DNA, the ATP-dependent uptake of single-stranded DNA by duplex DNA, and the ATP-dependent hybridization of homologous single-stranded DNAs. It interacts with LexA causing its activation and leading to its autocatalytic cleavage. The protein is Protein RecA of Haemophilus ducreyi (strain 35000HP / ATCC 700724).